Consider the following 325-residue polypeptide: Acetyl-coenzyme A carboxylase carboxyl transferase subunit alpha (325 aa).

The CoA carboxyltransferase C-terminal domain maps to 35-292 (EIEKLEARLT…DRVLRASLKQ (258 aa)).

The protein belongs to the AccA family. In terms of assembly, acetyl-CoA carboxylase is a heterohexamer composed of biotin carboxyl carrier protein (AccB), biotin carboxylase (AccC) and two subunits each of ACCase subunit alpha (AccA) and ACCase subunit beta (AccD).

It is found in the cytoplasm. The catalysed reaction is N(6)-carboxybiotinyl-L-lysyl-[protein] + acetyl-CoA = N(6)-biotinyl-L-lysyl-[protein] + malonyl-CoA. Its pathway is lipid metabolism; malonyl-CoA biosynthesis; malonyl-CoA from acetyl-CoA: step 1/1. In terms of biological role, component of the acetyl coenzyme A carboxylase (ACC) complex. First, biotin carboxylase catalyzes the carboxylation of biotin on its carrier protein (BCCP) and then the CO(2) group is transferred by the carboxyltransferase to acetyl-CoA to form malonyl-CoA. The protein is Acetyl-coenzyme A carboxylase carboxyl transferase subunit alpha of Geobacillus thermodenitrificans (strain NG80-2).